The sequence spans 974 residues: Isoleucine--tRNA ligase (974 aa).

The short motif at 69 to 79 (PYANGALHMGH) is the 'HIGH' region element. Residue Glu-585 participates in L-isoleucyl-5'-AMP binding. The 'KMSKS' region signature appears at 626–630 (KMSKS). An ATP-binding site is contributed by Lys-629. Zn(2+)-binding residues include Cys-939, Cys-942, Cys-959, and Cys-962.

The protein belongs to the class-I aminoacyl-tRNA synthetase family. IleS type 1 subfamily. Monomer. It depends on Zn(2+) as a cofactor.

It localises to the cytoplasm. It catalyses the reaction tRNA(Ile) + L-isoleucine + ATP = L-isoleucyl-tRNA(Ile) + AMP + diphosphate. In terms of biological role, catalyzes the attachment of isoleucine to tRNA(Ile). As IleRS can inadvertently accommodate and process structurally similar amino acids such as valine, to avoid such errors it has two additional distinct tRNA(Ile)-dependent editing activities. One activity is designated as 'pretransfer' editing and involves the hydrolysis of activated Val-AMP. The other activity is designated 'posttransfer' editing and involves deacylation of mischarged Val-tRNA(Ile). The chain is Isoleucine--tRNA ligase from Parasynechococcus marenigrum (strain WH8102).